The chain runs to 180 residues: Nucleoside triphosphate/diphosphate phosphatase (180 aa).

The Proton donor role is filled by Arg26. 6 residues coordinate Mg(2+): Asn90, Asp106, Asp108, Asp110, Asp123, and Glu126.

The protein belongs to the Ntdp family. Requires Mg(2+) as cofactor.

The enzyme catalyses a ribonucleoside 5'-triphosphate + H2O = a ribonucleoside 5'-diphosphate + phosphate + H(+). It carries out the reaction a ribonucleoside 5'-diphosphate + H2O = a ribonucleoside 5'-phosphate + phosphate + H(+). Functionally, has nucleoside phosphatase activity towards nucleoside triphosphates and nucleoside diphosphates. The chain is Nucleoside triphosphate/diphosphate phosphatase from Staphylococcus haemolyticus (strain JCSC1435).